We begin with the raw amino-acid sequence, 474 residues long: Glutamate--tRNA ligase (474 aa).

A 'HIGH' region motif is present at residues 9-19; sequence PSPTGFLHVGG. The 'KMSKS' region signature appears at 240–244; the sequence is KLSKR. Lys-243 contacts ATP.

The protein belongs to the class-I aminoacyl-tRNA synthetase family. Glutamate--tRNA ligase type 1 subfamily. As to quaternary structure, monomer.

The protein resides in the cytoplasm. The enzyme catalyses tRNA(Glu) + L-glutamate + ATP = L-glutamyl-tRNA(Glu) + AMP + diphosphate. Functionally, catalyzes the attachment of glutamate to tRNA(Glu) in a two-step reaction: glutamate is first activated by ATP to form Glu-AMP and then transferred to the acceptor end of tRNA(Glu). The sequence is that of Glutamate--tRNA ligase from Photobacterium profundum (strain SS9).